The chain runs to 544 residues: Chaperonin GroEL (544 aa).

Residues 30-33 (TLGP), Lys51, 87-91 (DGTTT), Gly415, 481-483 (DAL), and Asp497 each bind ATP.

This sequence belongs to the chaperonin (HSP60) family. In terms of assembly, forms a cylinder of 14 subunits composed of two heptameric rings stacked back-to-back. Interacts with the co-chaperonin GroES.

The protein localises to the cytoplasm. It carries out the reaction ATP + H2O + a folded polypeptide = ADP + phosphate + an unfolded polypeptide.. Together with its co-chaperonin GroES, plays an essential role in assisting protein folding. The GroEL-GroES system forms a nano-cage that allows encapsulation of the non-native substrate proteins and provides a physical environment optimized to promote and accelerate protein folding. The chain is Chaperonin GroEL from Chlamydia trachomatis serovar A (strain ATCC VR-571B / DSM 19440 / HAR-13).